The sequence spans 568 residues: MASSCAVQVKLELGHRAQVRKKPTVEGFTHDWMVFVRGPEHSNIQHFVEKVVFHLHESFPRPKRVCKDPPYKVEESGYAGFILPIEVYFKNKEEPRKVRFDYDLFLHLEGHPPVNHLRCEKLTFNNPTEDFRRKLLKAGGDPNRSIHTSSSSSSSSSSSSSSSSSSSSSSSSSSSSSSSSSSSSSSSSSSTSFSKPHKLMKEHKEKPSKDSREHKSAFKEPSRDHNKSSKESSKKPKENKPLKEEKIVPKMAFKEPKPMSKEPKPDSNLLTITSGQDKKAPSKRPPISDSEELSAKKRKKSSSEALFKSFSSAPPLILTCSADKKQIKDKSHVKMGKVKIESETSEKKKSTLPPFDDIVDPNDSDVEENISSKSDSEQPSPASSSSSSSSSFTPSQTRQQGPLRSIMKDLHSDDNEEESDEVEDNDNDSEMERPVNRGGSRSRRVSLSDGSDSESSSASSPLHHEPPPPLLKTNNNQILEVKSPIKQSKSDKQIKNGECDKAYLDELVELHRRLMTLRERHILQQIVNLIEETGHFHITNTTFDFDLCSLDKTTVRKLQSYLETSGTS.

Residues 1–138 (MASSCAVQVK…EDFRRKLLKA (138 aa)) form the YEATS domain. Histone H3K9cr binding stretches follow at residues 78–80 (YAG) and 106–108 (LHL). The tract at residues 138–475 (AGGDPNRSIH…PPPPLLKTNN (338 aa)) is disordered. Over residues 149 to 190 (SSSSSSSSSSSSSSSSSSSSSSSSSSSSSSSSSSSSSSSSSS) the composition is skewed to low complexity. The span at 202–265 (EHKEKPSKDS…PKPMSKEPKP (64 aa)) shows a compositional bias: basic and acidic residues. Phosphoserine is present on residues Ser-288 and Ser-294. A Nuclear localization signal motif is present at residues 295 to 300 (AKKRKK). Over residues 303–313 (SEALFKSFSSA) the composition is skewed to low complexity. Over residues 322-349 (ADKKQIKDKSHVKMGKVKIESETSEKKK) the composition is skewed to basic and acidic residues. Residue Lys-339 forms a Glycyl lysine isopeptide (Lys-Gly) (interchain with G-Cter in SUMO2) linkage. Acidic residues predominate over residues 357–368 (DIVDPNDSDVEE). Residues 371-395 (SSKSDSEQPSPASSSSSSSSSFTPS) show a composition bias toward low complexity. Phosphoserine is present on residues Ser-412 and Ser-419. Over residues 414-429 (DNEEESDEVEDNDNDS) the composition is skewed to acidic residues. The segment covering 445–461 (VSLSDGSDSESSSASSP) has biased composition (low complexity). Phosphoserine is present on Ser-483.

As to quaternary structure, component of the super elongation complex (SEC), at least composed of EAF1, EAF2, CDK9, MLLT3/AF9, AFF (AFF1 or AFF4), the P-TEFb complex and ELL (ELL, ELL2 or ELL3). Interacts with BCOR. Interacts with CBX8. Interacts with ALKBH4. As to expression, enriched in undifferentiated hematopoietic stem cells in fetal liver, cord blood and bone marrow.

The protein resides in the nucleus. The protein localises to the chromosome. With respect to regulation, crotonylated lysine binding is strongly inhibited by the peptide XL-07i, carrying a 2-furancarbonyl side chain and capped with a hydrophobic carboxybenzyl group. XL-07i targets the unique pi-pi-pi stacking interaction at the crotonylation recognition site. In terms of biological role, chromatin reader component of the super elongation complex (SEC), a complex required to increase the catalytic rate of RNA polymerase II transcription by suppressing transient pausing by the polymerase at multiple sites along the DNA. Specifically recognizes and binds acylated histone H3, with a preference for histone H3 that is crotonylated. Crotonylation marks active promoters and enhancers and confers resistance to transcriptional repressors. Recognizes and binds histone H3 crotonylated at 'Lys-9' (H3K9cr), and with slightly lower affinity histone H3 crotonylated at 'Lys-18' (H3K18cr). Also recognizes and binds histone H3 acetylated and butyrylated at 'Lys-9' (H3K9ac and H3K9bu, respectively), but with lower affinity than crotonylated histone H3. In the SEC complex, MLLT3 is required to recruit the complex to crotonylated histones. Recruitment of the SEC complex to crotonylated histones promotes recruitment of DOT1L on active chromatin to deposit histone H3 'Lys-79' methylation (H3K79me). Plays a key role in hematopoietic stem cell (HSC) maintenance by preserving, rather than conferring, HSC stemness. Acts by binding to the transcription start site of active genes in HSCs and sustaining level of H3K79me2, probably by recruiting DOT1L. The protein is Protein AF-9 of Homo sapiens (Human).